Here is a 141-residue protein sequence, read N- to C-terminus: Hemoglobin subunit alpha-1/2 (141 aa).

In terms of domain architecture, Globin spans 1–141; sequence VLSAABKSBV…VSTVLTSKYR (141 aa). S3 carries the post-translational modification Phosphoserine. N6-succinyllysine is present on residues K7 and K11. K16 carries the N6-acetyllysine; alternate modification. The residue at position 16 (K16) is an N6-succinyllysine; alternate. Y24 bears the Phosphotyrosine mark. Phosphoserine is present on S35. At K40 the chain carries N6-succinyllysine. Residue S49 is modified to Phosphoserine. An O2-binding site is contributed by H58. Residue H87 coordinates heme b. Residue S102 is modified to Phosphoserine. T108 is subject to Phosphothreonine. S124 is modified (phosphoserine). 2 positions are modified to phosphothreonine: T134 and T137. Position 138 is a phosphoserine (S138).

The protein belongs to the globin family. In terms of assembly, heterotetramer of two alpha chains and two beta chains. As to expression, red blood cells.

Involved in oxygen transport from the lung to the various peripheral tissues. In Odocoileus virginianus virginianus (Virginia white-tailed deer), this protein is Hemoglobin subunit alpha-1/2.